The chain runs to 226 residues: UPF0758 protein SPJ_1027 (226 aa).

Residues 103–225 form the MPN domain; the sequence is SILSSQKLAK…YFSYREKTDL (123 aa). Residues H174, H176, and D187 each contribute to the Zn(2+) site. A JAMM motif motif is present at residues 174–187; sequence HNHPSGAVAPSQND.

It belongs to the UPF0758 family.

This chain is UPF0758 protein SPJ_1027, found in Streptococcus pneumoniae (strain JJA).